The following is a 45-amino-acid chain: MTFQILFLFVFHFVYIFRAHQYPAYFEDEKDTYIKIRIYSPRSIS.

An N-terminal signal peptide occupies residues 1–19 (MTFQILFLFVFHFVYIFRA).

This is an uncharacterized protein from Saccharomyces cerevisiae (strain ATCC 204508 / S288c) (Baker's yeast).